Reading from the N-terminus, the 189-residue chain is HGPRTase-like protein (189 aa).

Belongs to the purine/pyrimidine phosphoribosyltransferase family. Archaeal HPRT subfamily.

Functionally, may catalyze a purine salvage reaction, the substrate is unknown. This Halomicrobium mukohataei (strain ATCC 700874 / DSM 12286 / JCM 9738 / NCIMB 13541) (Haloarcula mukohataei) protein is HGPRTase-like protein.